We begin with the raw amino-acid sequence, 323 residues long: Glucokinase (323 aa).

8–13 lines the ATP pocket; that stretch reads GDVGGT.

Belongs to the bacterial glucokinase family.

It localises to the cytoplasm. The enzyme catalyses D-glucose + ATP = D-glucose 6-phosphate + ADP + H(+). This chain is Glucokinase, found in Yersinia enterocolitica serotype O:8 / biotype 1B (strain NCTC 13174 / 8081).